The sequence spans 432 residues: Adenylosuccinate synthetase (432 aa).

GTP is bound by residues 12-18 (GDEGKGK) and 40-42 (GHT). The Proton acceptor role is filled by Asp13. Mg(2+)-binding residues include Asp13 and Gly40. IMP contacts are provided by residues 13–16 (DEGK), 38–41 (NAGH), Thr129, Arg143, Gln224, Thr239, and Arg303. The active-site Proton donor is the His41. Residue 299 to 305 (VTTGRRR) participates in substrate binding. GTP is bound by residues Arg305, 331–333 (KLD), and 413–415 (GVG).

This sequence belongs to the adenylosuccinate synthetase family. In terms of assembly, homodimer. Requires Mg(2+) as cofactor.

Its subcellular location is the cytoplasm. It catalyses the reaction IMP + L-aspartate + GTP = N(6)-(1,2-dicarboxyethyl)-AMP + GDP + phosphate + 2 H(+). Its pathway is purine metabolism; AMP biosynthesis via de novo pathway; AMP from IMP: step 1/2. Its function is as follows. Plays an important role in the de novo pathway of purine nucleotide biosynthesis. Catalyzes the first committed step in the biosynthesis of AMP from IMP. The protein is Adenylosuccinate synthetase of Mycobacterium tuberculosis (strain CDC 1551 / Oshkosh).